The primary structure comprises 207 residues: MGEKLTLEEGEFLVRLARKAIVHYLESGKKIEEKPPTQRLAEKRGVFVTLKKYPDDELRGCIGFPEPIKPLVEATVEAAISAATGDPRFPPMRDPSEMEEIKIEVSVLTPPKKLEVDNPKEYVEKIEIGRHGIIVRRGARSGLLLPQVPVEEGWDEIEFLSHACLKAGLPPDWWCSPDCEIYVFEAQVFEEEEPEGPVRERDLAEEQ.

The 193-residue stretch at 8 to 200 folds into the AMMECR1 domain; that stretch reads EEGEFLVRLA…EEEPEGPVRE (193 aa).

This is Protein MK0488 from Methanopyrus kandleri (strain AV19 / DSM 6324 / JCM 9639 / NBRC 100938).